Here is a 99-residue protein sequence, read N- to C-terminus: Secreted RxLR effector protein 94 (99 aa).

The RxLR-dEER signature appears at 35–55; that stretch reads RQLRQSANPSKAWHQWKSETR.

Belongs to the RxLR effector family.

The protein localises to the secreted. Its subcellular location is the host nucleus. The protein resides in the host cytoplasm. Its function is as follows. Secreted effector that completely suppresses the host cell death induced by cell death-inducing proteins. This chain is Secreted RxLR effector protein 94, found in Plasmopara viticola (Downy mildew of grapevine).